Reading from the N-terminus, the 590-residue chain is Protein I'm not dead yet (590 aa).

Transmembrane regions (helical) follow at residues Gly43 to Ala63, Ala82 to Met102, Thr115 to His135, Leu153 to Cys173, Leu224 to Gly244, Thr270 to Leu290, Leu329 to Met349, Ser373 to Leu393, Val457 to Phe477, Ala509 to Val529, and Met540 to Gln560.

Belongs to the SLC13A/DASS transporter (TC 2.A.47) family. NADC subfamily. In terms of tissue distribution, in adults, abundantly expressed in the fat body, basolateral region of midgut cells and oenocytes. Low level expression is seen in the halteres, procardia, restricted regions of the esophagus and hindgut, base of the legs and in a subset of cells in the third segment of the antennae.

The protein localises to the basolateral cell membrane. In terms of biological role, cation-independent electroneutral transporter (not associated with membrane depolarization) of a variety of tricarboxylic and dicarboxylic acid-cycle intermediates. There is also small, but detectable, transport of monocarboxylics. Transport is through the epithelium of the gut and across the plasma membranes of organs involved in intermediary metabolism and storage. Affinity for substrates is citrate &gt; succinate &gt; pyruvate. Fumarate, a-ketoglutarate, and glutarate are also transported, but not lactate. Transport mechanism that is not coupled to Na(+), K(+), or Cl(-). Function is shown in Xenopus oocytes and human retinal pigment epithelial (HRPE) cell lines. This is Protein I'm not dead yet (Indy) from Drosophila melanogaster (Fruit fly).